A 450-amino-acid polypeptide reads, in one-letter code: Serine/threonine-protein kinase SSN3 (450 aa).

The Protein kinase domain occupies 40 to 393 (YRIIGFISSG…AAQALQSPFF (354 aa)). ATP is bound by residues 46–54 (ISSGTYGRV) and K71. The active-site Proton acceptor is D173. 2 disordered regions span residues 307-341 (ASSH…NLEK) and 418-450 (QDDN…RQKE). Positions 310–326 (HHNHHSHHHPHHHHGHY) are enriched in basic residues.

Belongs to the protein kinase superfamily. CMGC Ser/Thr protein kinase family. CDC2/CDKX subfamily. As to quaternary structure, component of the SRB8-11 complex, a regulatory module of the Mediator complex. Interacts with SSN8/FCC1. Requires Mg(2+) as cofactor.

Its subcellular location is the nucleus. The catalysed reaction is L-seryl-[protein] + ATP = O-phospho-L-seryl-[protein] + ADP + H(+). It catalyses the reaction L-threonyl-[protein] + ATP = O-phospho-L-threonyl-[protein] + ADP + H(+). The enzyme catalyses [DNA-directed RNA polymerase] + ATP = phospho-[DNA-directed RNA polymerase] + ADP + H(+). Functionally, component of the SRB8-11 complex. The SRB8-11 complex is a regulatory module of the Mediator complex which is itself involved in regulation of basal and activated RNA polymerase II-dependent transcription. The SRB8-11 complex may be involved in the transcriptional repression of a subset of genes regulated by Mediator. It may inhibit the association of the Mediator complex with RNA polymerase II to form the holoenzyme complex. The SRB8-11 complex phosphorylates the C-terminal domain (CTD) of the largest subunit of RNA polymerase II. Required for normal growth and secondary metabolism. This Gibberella moniliformis (Maize ear and stalk rot fungus) protein is Serine/threonine-protein kinase SSN3 (SSN3).